The sequence spans 313 residues: MNTFSQVWVFSDTPSRLPELMNGAQALANQINTFVLNDADGVQAIQLGANHVWKLNGKPDDRMIEDYAGVMADTIRQHGADGLVLLPNTRRGKLLAAKLGYRLKAAVSNDASTISVQDGKATVKHMVYGGLAIGEERIATPYAVLTISSGTFDAAQPDASRTGETHTVEWQAPAVAITRTATQARQSNSVDLDKARLVVSVGRGIGSKENIALAEQLCKAIGAELACSRPVAENEKWMEHERYVGISNLMLKPELYLAVGISGQIQHMVGANASQTIFAINKDKNAPIFQYADYGIVGDAVKILPALTAALAR.

An FAD-binding site is contributed by 255–283 (LYLAVGISGQIQHMVGANASQTIFAINKD).

Belongs to the ETF alpha-subunit/FixB family. As to quaternary structure, heterodimer of FixA and FixB.

It participates in amine and polyamine metabolism; carnitine metabolism. Required for anaerobic carnitine reduction. May bring reductant to CaiA. The protein is Protein FixB of Escherichia coli (strain 55989 / EAEC).